A 272-amino-acid chain; its full sequence is MPEVPAAGLWPFLLLLAVQVSTVASSTQPWHCAPCSAEKLALCPPVPSSCPELSRPAGCGCCPMCALPLGAACGVATARYARGLSCRALPGEPRPLHALTRGQGACVPEPATPTASGLSSIEKEEAKASMVPERVPPESAEMTEEQLLESFHLMASSSEDQPILWNAISTYKSMRAREMADIKKWKQPCRRELYKVLERLAKAQQKAGEEIYKFYLPNCNKNGFYHSKQCETSLDGEAELCWCVYPWSGRRIPGSLEIRGDPNCHQYFNVQN.

An N-terminal signal peptide occupies residues 1–25 (MPEVPAAGLWPFLLLLAVQVSTVAS). Positions 28 to 109 (QPWHCAPCSA…TRGQGACVPE (82 aa)) constitute an IGFBP N-terminal domain. Intrachain disulfides connect Cys32-Cys59, Cys35-Cys61, Cys43-Cys62, Cys50-Cys65, and Cys73-Cys86. Phosphoserine occurs at positions 139, 157, and 169. Position 170 is a phosphothreonine (Thr170). Tyr171 is subject to Phosphotyrosine. Residues 186 to 264 (KQPCRRELYK…SLEIRGDPNC (79 aa)) enclose the Thyroglobulin type-1 domain. 3 disulfides stabilise this stretch: Cys189-Cys219, Cys230-Cys241, and Cys243-Cys264. Ser255 is subject to Phosphoserine. Positions 259 to 261 (RGD) match the Cell attachment site motif.

Binds equally well IGF1 and IGF2. Interacts with integrin ITGA5:ITGB1. Interacts with VHL; this interaction inhibits HIF1A degradation.

The protein resides in the secreted. Functionally, multifunctional protein that plays a critical role in regulating the availability of IGFs such as IGF1 and IGF2 to their receptors and thereby regulates IGF-mediated cellular processes including cell migration, proliferation, differentiation or apoptosis in a cell-type specific manner. Also plays a positive role in cell migration by interacting with integrin ITGA5:ITGB1 through its RGD motif. Mechanistically, binding to integrins leads to activation of focal adhesion kinase/PTK2 and stimulation of the mitogen-activated protein kinase (MAPK) pathway. Regulates cardiomyocyte apoptosis by suppressing HIF-1alpha/HIF1A degradation through ubiquitination. The polypeptide is Insulin-like growth factor-binding protein 1 (IGFBP1) (Ictidomys tridecemlineatus (Thirteen-lined ground squirrel)).